Consider the following 610-residue polypeptide: Alpha-fetoprotein (610 aa).

An N-terminal signal peptide occupies residues 1–18; the sequence is MKWVVSIFLIVLLNFTES. Albumin domains follow at residues 19 to 210, 211 to 403, and 404 to 602; these read RTMH…ASIT, KELR…EELE, and KYIQ…ALIS. His22 is a binding site for Cu(2+). Intrachain disulfides connect Cys99–Cys114, Cys113–Cys124, Cys148–Cys193, Cys192–Cys201, Cys224–Cys270, Cys269–Cys277, Cys289–Cys303, and Cys302–Cys314. Phosphoserine is present on residues Ser111, Ser115, and Ser117. Asn251 is a glycosylation site (N-linked (GlcNAc...) asparagine). Residue Ser345 is modified to Phosphoserine. 7 cysteine pairs are disulfide-bonded: Cys385–Cys394, Cys417–Cys463, Cys462–Cys473, Cys486–Cys502, Cys501–Cys512, Cys539–Cys584, and Cys583–Cys592.

Belongs to the ALB/AFP/VDB family. Dimeric and trimeric forms have been found in addition to the monomeric form. Plasma. Synthesized by the fetal liver and yolk sac.

The protein resides in the secreted. Binds copper, nickel, and fatty acids as well as, and bilirubin less well than, serum albumin. The chain is Alpha-fetoprotein (AFP) from Sus scrofa (Pig).